Here is a 409-residue protein sequence, read N- to C-terminus: MRQEVHDAARRARVAARALAVMPTVAKDHALRAAATAVTAHTEEILAANAEDLQAARATDTLAATLDRLALDRQRIDQIAGGLRQVAALPDPIGEVLRGYTLPNGLQLRQQRVPLGVVGMIYEGRPNITVDAFGLAFKSGNAALLRGSSSAAKSNQALVEVLHAALVSEDLPADAVQLLSAADRSTVTHLIQARGLVDVVIPRGGANLIDAVVRDAQVPIIETGVGNCHVYVHQAADLEVAERILLNSKTRRPSVCNAAETLLIDAAIADHTMPRLVAALQGAGVTVHGGLSGDPDKADLCREYLSMDIAVAVVDGVDAAIAHINEYGTGHTEAIVTTNMAAAQRFADGVDSATVMVNASTAFTDGGQFGFGAEIGISTQKLHARGPMGLSEMTSTKWIVWGDGQIRPA.

The protein belongs to the gamma-glutamyl phosphate reductase family.

The protein resides in the cytoplasm. It catalyses the reaction L-glutamate 5-semialdehyde + phosphate + NADP(+) = L-glutamyl 5-phosphate + NADPH + H(+). It functions in the pathway amino-acid biosynthesis; L-proline biosynthesis; L-glutamate 5-semialdehyde from L-glutamate: step 2/2. In terms of biological role, catalyzes the NADPH-dependent reduction of L-glutamate 5-phosphate into L-glutamate 5-semialdehyde and phosphate. The product spontaneously undergoes cyclization to form 1-pyrroline-5-carboxylate. In Mycobacterium leprae (strain TN), this protein is Gamma-glutamyl phosphate reductase.